We begin with the raw amino-acid sequence, 127 residues long: Fluoride-specific ion channel FluC (127 aa).

The next 4 helical transmembrane spans lie at 4–24, 36–56, 68–88, and 99–119; these read SILA…FLGL, GTLL…AYFA, LIIT…AEVV, and AAGA…LGLF. Positions 75 and 78 each coordinate Na(+).

It belongs to the fluoride channel Fluc/FEX (TC 1.A.43) family.

It is found in the cell inner membrane. The enzyme catalyses fluoride(in) = fluoride(out). Na(+) is not transported, but it plays an essential structural role and its presence is essential for fluoride channel function. Functionally, fluoride-specific ion channel. Important for reducing fluoride concentration in the cell, thus reducing its toxicity. The sequence is that of Fluoride-specific ion channel FluC from Pseudomonas paraeruginosa (strain DSM 24068 / PA7) (Pseudomonas aeruginosa (strain PA7)).